The sequence spans 477 residues: Cytochrome P450 monooxygenase poxC (477 aa).

The helical transmembrane segment at 24 to 41 (AWHFAVLSFVYVIARSIY) threads the bilayer. Cys-420 is a heme binding site.

Belongs to the cytochrome P450 family. Heme serves as cofactor.

The protein resides in the membrane. The protein operates within secondary metabolite biosynthesis. Functionally, cytochrome P450 monooxygenase; part of the gene cluster that mediates the biosynthesis of oxaleimides, cytotoxic compounds containing an unusual disubstituted succinimide moiety. The first step of the pathway is provided by the HR-PKS poxF that serves in a new mode of collaborative biosynthesis with the PKS-NRPS poxE, by providing the olefin containing amino acid substrate via the synthesis of an ACP-bound dec-4-enoate. The cytochrome P450 monooxygenase poxM-catalyzed oxidation at the alpha-position creates the enzyme-bound 2-hydroxydec-4-enoyl-ACP thioester, which may be prone to spontaneous hydrolysis to yield 2-hydroxydec-4-enoic acid due to increased electrophilicity of the carbonyl. 2-hydroxydec-4-enoic acid can then be further oxidized by poxM to yield the alpha-ketoacid 2-oxodec-4-enoicacid, which is reductively aminated by the aminotransferase poxL to yield (S,E)-2-aminodec-4-enoic acid. The Hybrid PKS-NRPS synthetase poxE then performs condensation between the octaketide product of its PKS modules and the amino group of (S,E)-2-aminodec-4-enoic acid which is activated and incorporated by the adenylation domain. The resulting aminoacyl product can be cyclized by the Diels-Alderase PoxQ and reductively released by the reductive (R) domain of poxE to yield an aldehyde intermediate. The released aldehyde is then substrate for a Knoevenagel condensation by the hydrolyase poxO followed by an oxidation at the 5-position of the pyrrolidone ring. The presence of the olefin from the amino acid building block allows for migration of the substituted allyl group to occur. This allylic transposition reaction takes place in a conjugate addition, semipinacol-like fashion to yield a succinimide intermediate. Iterative two-electron oxidations of the C7 methyl of the succinimide intermediate to the carboxylic acid can be catalyzed by one of two remaining cytochrome P450 monooxygenasess poxC or poxD to yield oxaleimide A. Subsequent oxidation yields the maleimide scaffold oxaleimide I. Both oxaleimide A and oxaleimide I can undergo oxidative modifications in the decalin ring to yield the series of products oxaleimides B to H. In Penicillium oxalicum (strain 114-2 / CGMCC 5302) (Penicillium decumbens), this protein is Cytochrome P450 monooxygenase poxC.